Here is a 312-residue protein sequence, read N- to C-terminus: Ribosomal RNA small subunit methyltransferase H (312 aa).

Residues 35-37, Asp55, Phe79, Asp100, and Gln107 contribute to the S-adenosyl-L-methionine site; that span reads GGH.

Belongs to the methyltransferase superfamily. RsmH family.

The protein resides in the cytoplasm. It carries out the reaction cytidine(1402) in 16S rRNA + S-adenosyl-L-methionine = N(4)-methylcytidine(1402) in 16S rRNA + S-adenosyl-L-homocysteine + H(+). Its function is as follows. Specifically methylates the N4 position of cytidine in position 1402 (C1402) of 16S rRNA. This is Ribosomal RNA small subunit methyltransferase H from Azoarcus sp. (strain BH72).